The primary structure comprises 314 residues: Endo-beta-N-acetylglucosaminidase (314 aa).

Positions 1-47 (MQFGIVAAIADGGRTARAGGSVRPPRRPPASHTAWGLPRGRPTGQPH) are cleaved as a signal peptide. The segment at 14 to 54 (RTARAGGSVRPPRRPPASHTAWGLPRGRPTGQPHATPTKSG) is disordered. Positions 55-309 (PTSIAYVEVN…SSMTKVLYGQ (255 aa)) constitute a GH18 domain. The active-site Proton donor is the E175.

Belongs to the glycosyl hydrolase 18 family. As to quaternary structure, monomer.

The protein resides in the secreted. The enzyme catalyses an N(4)-(oligosaccharide-(1-&gt;3)-[oligosaccharide-(1-&gt;6)]-beta-D-Man-(1-&gt;4)-beta-D-GlcNAc-(1-&gt;4)-alpha-D-GlcNAc)-L-asparaginyl-[protein] + H2O = an oligosaccharide-(1-&gt;3)-[oligosaccharide-(1-&gt;6)]-beta-D-Man-(1-&gt;4)-D-GlcNAc + N(4)-(N-acetyl-beta-D-glucosaminyl)-L-asparaginyl-[protein]. In terms of biological role, cleaves asparagine-linked oligomannose and hybrid, but not complex, oligosaccharides from glycoproteins. In Flavobacterium sp. (strain SK1022), this protein is Endo-beta-N-acetylglucosaminidase.